We begin with the raw amino-acid sequence, 48 residues long: FQPIKESIVSRLFNAVAAEDLIVKGGREIVPGMIVTGMEVAEIDGAPR.

The substrate site is built by Ala18 and Val40.

It belongs to the THI4 family. In terms of assembly, homooctamer. Fe cation is required as a cofactor.

The protein localises to the plastid. It localises to the chloroplast. It carries out the reaction [ADP-thiazole synthase]-L-cysteine + glycine + NAD(+) = [ADP-thiazole synthase]-dehydroalanine + ADP-5-ethyl-4-methylthiazole-2-carboxylate + nicotinamide + 3 H2O + 2 H(+). In terms of biological role, involved in biosynthesis of the thiamine precursor thiazole. Catalyzes the conversion of NAD and glycine to adenosine diphosphate 5-(2-hydroxyethyl)-4-methylthiazole-2-carboxylic acid (ADT), an adenylated thiazole intermediate. The reaction includes an iron-dependent sulfide transfer from a conserved cysteine residue of the protein to a thiazole intermediate. The enzyme can only undergo a single turnover, which suggests it is a suicide enzyme. May have additional roles in adaptation to various stress conditions and in DNA damage tolerance. This Populus euphratica (Euphrates poplar) protein is Thiamine thiazole synthase, chloroplastic (THI1).